A 653-amino-acid polypeptide reads, in one-letter code: ATP-dependent zinc metalloprotease FtsH 1 (653 aa).

The interval 1–20 (MPENKNDKENKNDKENKNTK) is disordered. Topologically, residues 1-30 (MPENKNDKENKNDKENKNTKEEKKKVKFSN) are cytoplasmic. The helical transmembrane segment at 31-51 (IIWVYIIFAVFFIGALISLNW) threads the bilayer. The Periplasmic segment spans residues 52-126 (ENNPIISYSE…EYVESVGTKW (75 aa)). A helical transmembrane segment spans residues 127-147 (WFGLLINIIPIVVMVLFFFWL). Residues 148-653 (YRSASAGARS…VVNHVNYQPV (506 aa)) lie on the Cytoplasmic side of the membrane. Position 219–226 (219–226 (GPPGTGKT)) interacts with ATP. His-441 serves as a coordination point for Zn(2+). The active site involves Glu-442. Residues His-445 and Asp-518 each contribute to the Zn(2+) site.

It in the central section; belongs to the AAA ATPase family. The protein in the C-terminal section; belongs to the peptidase M41 family. In terms of assembly, homohexamer. Requires Zn(2+) as cofactor.

It localises to the cell inner membrane. In terms of biological role, acts as a processive, ATP-dependent zinc metallopeptidase for both cytoplasmic and membrane proteins. Plays a role in the quality control of integral membrane proteins. In Petrotoga mobilis (strain DSM 10674 / SJ95), this protein is ATP-dependent zinc metalloprotease FtsH 1.